The primary structure comprises 225 residues: Pathogenesis-related 5 protein Jun a 3.0101 (225 aa).

The N-terminal stretch at 1–26 is a signal peptide; the sequence is MARVSELAFLLAATLAISLHMQEAGV. 8 disulfides stabilise this stretch: C35–C224, C76–C86, C91–C97, C139–C213, C144–C197, C152–C162, C166–C175, and C176–C184. 3 igE-binding regions span residues 146-157, 158-170, and 178-191; these read ADINAVCPSELK, VDGGCNSACNVFK, and NAYVDNCPATNYSK.

Belongs to the thaumatin family. In terms of tissue distribution, expressed in pollen (at protein level).

The chain is Pathogenesis-related 5 protein Jun a 3.0101 from Juniperus ashei (Ozark white cedar).